Here is a 712-residue protein sequence, read N- to C-terminus: uncharacterized protein (712 aa).

Disordered stretches follow at residues 1-46 (MAKI…NNLN), 107-264 (NIKP…IPQA), and 370-389 (QPQH…QQNQ). Low complexity-rich tracts occupy residues 10–46 (INNS…NNLN), 107–143 (NIKP…SNSS), and 161–173 (TFDN…NSSN). Positions 178–187 (ISPTTSPQLE) are enriched in polar residues. Composition is skewed to low complexity over residues 188–198 (QHQQYQQQQHQ) and 241–264 (PLQQ…IPQA).

This is an uncharacterized protein from Dictyostelium discoideum (Social amoeba).